A 502-amino-acid polypeptide reads, in one-letter code: Protein O-glucosyltransferase 2 (502 aa).

An N-terminal signal peptide occupies residues 1–19; sequence MFGTLLLYCFFLATVPALA. The stretch at 24-130 is one Filamin repeat; the sequence is ERQLSPEKSE…VAKSPYILKG (107 aa). N-linked (GlcNAc...) asparagine glycans are attached at residues N302 and N414. The Prevents secretion from ER motif lies at 499–502; that stretch reads KDEL.

Belongs to the KDELC family. In terms of processing, N-glycosylated.

It is found in the endoplasmic reticulum lumen. It catalyses the reaction L-seryl-[EGF-like domain protein] + UDP-alpha-D-glucose = 3-O-(beta-D-glucosyl)-L-seryl-[EGF-like domain protein] + UDP + H(+). It carries out the reaction L-seryl-[EGF-like domain protein] + UDP-alpha-D-xylose = 3-O-(beta-D-xylosyl)-L-seryl-[EGF-like domain protein] + UDP + H(+). Its pathway is protein modification; protein glycosylation. Its function is as follows. Protein glucosyltransferase that catalyzes the transfer of glucose from UDP-glucose to a serine residue within the consensus sequence peptide C-X-N-T-X-G-S-F-X-C. Can also catalyze the transfer of xylose from UDP-xylose but less efficiently. Specifically targets extracellular EGF repeats of proteins such as NOTCH1, NOTCH3, FBN1, FBN2 and LTBP1. May regulate the transport of NOTCH1 and NOTCH3 to the plasma membrane and thereby the Notch signaling pathway. This Homo sapiens (Human) protein is Protein O-glucosyltransferase 2.